Reading from the N-terminus, the 90-residue chain is Small ribosomal subunit protein bS20 (90 aa).

The segment at 1-21 (MANHKSALKRVRQTKKRTERN) is disordered.

It belongs to the bacterial ribosomal protein bS20 family.

Functionally, binds directly to 16S ribosomal RNA. This chain is Small ribosomal subunit protein bS20, found in Nitratiruptor sp. (strain SB155-2).